The chain runs to 269 residues: Surfeit locus protein 4 (269 aa).

6 consecutive transmembrane segments (helical) span residues 64–84 (FLAS…CILV), 92–112 (YACF…SILW), 157–177 (MQLG…HFDM), 179–199 (FFYI…AIGF), 203–223 (LAAL…NAFW), and 242–262 (TMSV…GVSM). A Di-lysine motif motif is present at residues 266–269 (KKEW).

This sequence belongs to the SURF4 family.

It localises to the endoplasmic reticulum membrane. It is found in the endoplasmic reticulum-Golgi intermediate compartment membrane. The protein localises to the golgi apparatus membrane. Its function is as follows. Endoplasmic reticulum cargo receptor that mediates the export of lipoproteins by recruiting cargos into COPII vesicles to facilitate their secretion. Acts as a cargo receptor for lipoproteins bearing both APOB and APOA1, thereby regulating lipoprotein delivery and the maintenance of lipid homeostasis. This chain is Surfeit locus protein 4, found in Gallus gallus (Chicken).